Consider the following 290-residue polypeptide: Light-independent protochlorophyllide reductase iron-sulfur ATP-binding protein (290 aa).

ATP-binding positions include 10–15 (GIGKST) and Lys-39. Ser-14 contributes to the Mg(2+) binding site. [4Fe-4S] cluster is bound by residues Cys-95 and Cys-129. 180 to 181 (NR) lines the ATP pocket.

Belongs to the NifH/BchL/ChlL family. In terms of assembly, homodimer. Protochlorophyllide reductase is composed of three subunits; ChlL, ChlN and ChlB. It depends on [4Fe-4S] cluster as a cofactor.

The protein resides in the plastid. The protein localises to the chloroplast. The enzyme catalyses chlorophyllide a + oxidized 2[4Fe-4S]-[ferredoxin] + 2 ADP + 2 phosphate = protochlorophyllide a + reduced 2[4Fe-4S]-[ferredoxin] + 2 ATP + 2 H2O. It functions in the pathway porphyrin-containing compound metabolism; chlorophyll biosynthesis (light-independent). Functionally, component of the dark-operative protochlorophyllide reductase (DPOR) that uses Mg-ATP and reduced ferredoxin to reduce ring D of protochlorophyllide (Pchlide) to form chlorophyllide a (Chlide). This reaction is light-independent. The L component serves as a unique electron donor to the NB-component of the complex, and binds Mg-ATP. This is Light-independent protochlorophyllide reductase iron-sulfur ATP-binding protein from Angiopteris evecta (Mule's foot fern).